We begin with the raw amino-acid sequence, 343 residues long: Cathepsin Q (343 aa).

A signal peptide spans 1–20 (MTPAVFLVILCLGVVPGASA). Residues 21–124 (LDLSLDVQWQ…FPNSWNWRDA (104 aa)) constitute a propeptide, activation peptide. 2 cysteine pairs are disulfide-bonded: cysteine 146/cysteine 189 and cysteine 180/cysteine 222. The active site involves cysteine 149. A glycan (N-linked (GlcNAc...) asparagine) is linked at asparagine 228. A disulfide bridge connects residues cysteine 280 and cysteine 332. Histidine 286 is an active-site residue. Asparagine 298 carries an N-linked (GlcNAc...) asparagine glycan. Residue asparagine 310 is part of the active site.

The protein belongs to the peptidase C1 family. Highly expressed in placenta.

Its subcellular location is the lysosome. This is Cathepsin Q (Ctsq) from Rattus norvegicus (Rat).